We begin with the raw amino-acid sequence, 388 residues long: Mannitol-1-phosphate 5-dehydrogenase (388 aa).

Ala-5–Gly-16 contributes to the NAD(+) binding site. The active site involves Lys-213.

This sequence belongs to the mannitol dehydrogenase family. As to quaternary structure, monomer.

The enzyme catalyses D-mannitol 1-phosphate + NAD(+) = beta-D-fructose 6-phosphate + NADH + H(+). Its function is as follows. Catalyzes the NAD(H)-dependent interconversion of D-fructose 6-phosphate and D-mannitol 1-phosphate in the mannitol metabolic pathway. This Neosartorya fischeri (strain ATCC 1020 / DSM 3700 / CBS 544.65 / FGSC A1164 / JCM 1740 / NRRL 181 / WB 181) (Aspergillus fischerianus) protein is Mannitol-1-phosphate 5-dehydrogenase (mpdA).